We begin with the raw amino-acid sequence, 270 residues long: Flavin-dependent thymidylate synthase (270 aa).

A ThyX domain is found at 13–218; sequence GFVRLVDQMG…PLAWAAFEEH (206 aa). FAD contacts are provided by residues Ser-59, 82–84, and Glu-90; that span reads RHR. DUMP contacts are provided by residues 79–82, 90–94, and Arg-157; these read QWFR and EISGR. A ThyX motif motif is present at residues 82-92; sequence RHRTASVNEIS. FAD contacts are provided by residues 173–175 and His-179; that span reads DLH. Residue Arg-184 participates in dUMP binding. Arg-184 acts as the Involved in ionization of N3 of dUMP, leading to its activation in catalysis.

The protein belongs to the thymidylate synthase ThyX family. As to quaternary structure, homotetramer. FAD serves as cofactor.

It carries out the reaction dUMP + (6R)-5,10-methylene-5,6,7,8-tetrahydrofolate + NADPH + H(+) = dTMP + (6S)-5,6,7,8-tetrahydrofolate + NADP(+). Its pathway is pyrimidine metabolism; dTTP biosynthesis. Catalyzes the reductive methylation of 2'-deoxyuridine-5'-monophosphate (dUMP) to 2'-deoxythymidine-5'-monophosphate (dTMP) while utilizing 5,10-methylenetetrahydrofolate (mTHF) as the methyl donor, and NADPH and FADH(2) as the reductant. This is Flavin-dependent thymidylate synthase from Thermus thermophilus (strain ATCC 27634 / DSM 579 / HB8).